We begin with the raw amino-acid sequence, 281 residues long: Pantothenate synthetase (281 aa).

30–37 (MGNLHQGH) lines the ATP pocket. The Proton donor role is filled by His-37. Gln-61 contributes to the (R)-pantoate binding site. Gln-61 contacts beta-alanine. Position 149 to 152 (149 to 152 (GNKD)) interacts with ATP. (R)-pantoate is bound at residue Gln-155. Residues Ile-178 and 186 to 189 (MSSR) contribute to the ATP site.

The protein belongs to the pantothenate synthetase family. Homodimer.

The protein localises to the cytoplasm. It catalyses the reaction (R)-pantoate + beta-alanine + ATP = (R)-pantothenate + AMP + diphosphate + H(+). Its pathway is cofactor biosynthesis; (R)-pantothenate biosynthesis; (R)-pantothenate from (R)-pantoate and beta-alanine: step 1/1. Its function is as follows. Catalyzes the condensation of pantoate with beta-alanine in an ATP-dependent reaction via a pantoyl-adenylate intermediate. This chain is Pantothenate synthetase, found in Shewanella sp. (strain MR-7).